Here is an 87-residue protein sequence, read N- to C-terminus: Small ribosomal subunit protein eS21 (87 aa).

The protein belongs to the eukaryotic ribosomal protein eS21 family. Component of the small ribosomal subunit. Mature ribosomes consist of a small (40S) and a large (60S) subunit. The 40S subunit contains about 33 different proteins and 1 molecule of RNA (18S). The 60S subunit contains about 49 different proteins and 3 molecules of RNA (25S, 5.8S and 5S).

The protein localises to the cytoplasm. Required for the processing of the 20S rRNA-precursor to mature 18S rRNA in a late step of the maturation of 40S ribosomal subunits. Has a physiological role leading to 18S rRNA stability. The polypeptide is Small ribosomal subunit protein eS21 (RPS21) (Candida glabrata (strain ATCC 2001 / BCRC 20586 / JCM 3761 / NBRC 0622 / NRRL Y-65 / CBS 138) (Yeast)).